Reading from the N-terminus, the 864-residue chain is N-alpha-acetyltransferase 16, NatA auxiliary subunit (864 aa).

TPR repeat units lie at residues 46–79 (GETL…DVRS), 80–113 (HVCW…DKDN), 148–184 (RASW…PPNK), 224–257 (LLVE…NAEN), 374–407 (IWVQ…TPTL), 408–441 (IELF…DTAD), and 485–514 (MWFE…VERH). The tract at residues 594-646 (KMLSKQRRAQKKAKVEEERKHTERERQQKNQKKKREEEEEVTSGHKEELIPEK) is disordered. A compositionally biased stretch (basic residues) spans 595–605 (MLSKQRRAQKK). 2 stretches are compositionally biased toward basic and acidic residues: residues 606–621 (AKVE…ERQQ) and 635–646 (TSGHKEELIPEK).

Component of the N-terminal acetyltransferase A (NatA) complex composed of NAA10 and NAA16. As to expression, highest levels in the kidney and testes. Moderate expression in the liver, thymus and skin.

In terms of biological role, auxillary subunit of the N-terminal acetyltransferase A (NatA) complex which displays alpha (N-terminal) acetyltransferase activity. The protein is N-alpha-acetyltransferase 16, NatA auxiliary subunit (Naa16) of Mus musculus (Mouse).